The sequence spans 655 residues: Broad substrate specificity ATP-binding cassette transporter ABCG2 (655 aa).

The Cytoplasmic segment spans residues 1–395 (MSSSNVEVFI…KNLLGNPQAS (395 aa)). The ABC transporter domain maps to 37–286 (LSFHNICYRV…FESAGYHCEA (250 aa)). ATP is bound by residues 80–87 (GPTGGGKS), 184–190 (RGVSGGE), Glu-211, and His-243. Thr-362 carries the phosphothreonine; by PIM1 modification. The ABC transmembrane type-2 domain maps to 389–651 (LGNPQASIAQ…TIAYLKLLFL (263 aa)). A helical transmembrane segment spans residues 396 to 416 (IAQIIVTVVLGLVIGAIYFGL). The Extracellular segment spans residues 417-428 (KNDSTGIQNRAG). A helical transmembrane segment spans residues 429 to 449 (VLFFLTTNQCFSSVSAVELFV). Residues 450–477 (VEKKLFIHEYISGYYRVSSYFLGKLLSD) lie on the Cytoplasmic side of the membrane. Residues 478 to 498 (LLPMRMLPSIIFTCIVYFMLG) form a helical membrane-spanning segment. At 499–506 (LKPKADAF) the chain is on the extracellular side. A helical membrane pass occupies residues 507-527 (FVMMFTLMMVAYSASSMALAI). The Cytoplasmic portion of the chain corresponds to 528–535 (AAGQSVVS). Residues 536–556 (VATLLMTICFVFMMIFSGLLV) form a helical membrane-spanning segment. Residues 557-630 (NLTTIASWLS…LSPWGLWKNH (74 aa)) lie on the Extracellular side of the membrane. A disulfide bridge links Cys-592 with Cys-608. N-linked (GlcNAc...) asparagine glycosylation is present at Asn-596. The helical transmembrane segment at 631-651 (VALACMIVIFLTIAYLKLLFL) threads the bilayer. Topologically, residues 652 to 655 (KKYS) are cytoplasmic.

The protein belongs to the ABC transporter superfamily. ABCG family. Eye pigment precursor importer (TC 3.A.1.204) subfamily. In terms of assembly, homodimer; disulfide-linked. The minimal functional unit is a homodimer, but the major oligomeric form in plasma membrane is a homotetramer with possibility of higher order oligomerization up to homododecamers. In terms of processing, N-glycosylated. Glycosylation-deficient ABCG2 is normally expressed and functional. Post-translationally, phosphorylated. Phosphorylation at Thr-362 by PIM1 is induced by drugs like mitoxantrone and is associated with cells increased drug resistance. It regulates the localization to the plasma membrane, the homooligomerization and therefore, the activity of the transporter. In terms of tissue distribution, highly expressed in placenta. Low expression in small intestine, liver and colon. Expressed in brain (at protein level).

It localises to the cell membrane. It is found in the apical cell membrane. The protein localises to the mitochondrion membrane. It carries out the reaction ATP + H2O + xenobioticSide 1 = ADP + phosphate + xenobioticSide 2.. The enzyme catalyses urate(in) + ATP + H2O = urate(out) + ADP + phosphate + H(+). It catalyses the reaction indoxyl sulfate(in) + ATP + H2O = indoxyl sulfate(out) + ADP + phosphate + H(+). The catalysed reaction is sphing-4-enine 1-phosphate(in) + ATP + H2O = sphing-4-enine 1-phosphate(out) + ADP + phosphate + H(+). It carries out the reaction estrone 3-sulfate(in) + ATP + H2O = estrone 3-sulfate(out) + ADP + phosphate + H(+). The enzyme catalyses dehydroepiandrosterone 3-sulfate(in) + ATP + H2O = dehydroepiandrosterone 3-sulfate(out) + ADP + phosphate + H(+). It catalyses the reaction 4-methylumbelliferone sulfate(in) + ATP + H2O = 4-methylumbelliferone sulfate(out) + ADP + phosphate + H(+). The catalysed reaction is 5,7-dimethyl-2-methylamino-4-(3-pyridylmethyl)-1,3-benzothiazol-6-yl beta-D-glucuronate(in) + ATP + H2O = 5,7-dimethyl-2-methylamino-4-(3-pyridylmethyl)-1,3-benzothiazol-6-yl beta-D-glucuronate(out) + ADP + phosphate + H(+). It carries out the reaction 4-methylumbelliferone beta-D-glucuronate(in) + ATP + H2O = 4-methylumbelliferone beta-D-glucuronate(out) + ADP + phosphate + H(+). The enzyme catalyses 5,7-dimethyl-2-methylamino-4-(3-pyridylmethyl)-1,3-benzothiazol-6-yl sulfate(in) + ATP + H2O = 5,7-dimethyl-2-methylamino-4-(3-pyridylmethyl)-1,3-benzothiazol-6-yl sulfate(out) + ADP + phosphate + H(+). It catalyses the reaction 17beta-estradiol 17-O-(beta-D-glucuronate)(in) + ATP + H2O = 17beta-estradiol 17-O-(beta-D-glucuronate)(out) + ADP + phosphate + H(+). The catalysed reaction is methotrexate(in) + ATP + H2O = methotrexate(out) + ADP + phosphate + H(+). It carries out the reaction riboflavin(in) + ATP + H2O = riboflavin(out) + ADP + phosphate + H(+). The enzyme catalyses pheophorbide a(in) + ATP + H2O = pheophorbide a(out) + ADP + phosphate + H(+). It catalyses the reaction itaconate(in) + ATP + H2O = itaconate(out) + ADP + phosphate + H(+). Its activity is regulated as follows. Specifically inhibited by the fungal toxin fumitremorgin C and Ko143. Its function is as follows. Broad substrate specificity ATP-dependent transporter of the ATP-binding cassette (ABC) family that actively extrudes a wide variety of physiological compounds, dietary toxins and xenobiotics from cells. Involved in porphyrin homeostasis, mediating the export of protoporphyrin IX (PPIX) from both mitochondria to cytosol and cytosol to extracellular space, it also functions in the cellular export of heme. Also mediates the efflux of sphingosine-1-P from cells. Acts as a urate exporter functioning in both renal and extrarenal urate excretion. In kidney, it also functions as a physiological exporter of the uremic toxin indoxyl sulfate. Also involved in the excretion of steroids like estrone 3-sulfate/E1S, 3beta-sulfooxy-androst-5-en-17-one/DHEAS, and other sulfate conjugates. Mediates the secretion of the riboflavin and biotin vitamins into milk. Extrudes pheophorbide a, a phototoxic porphyrin catabolite of chlorophyll, reducing its bioavailability. Plays an important role in the exclusion of xenobiotics from the brain. It confers to cells a resistance to multiple drugs and other xenobiotics including mitoxantrone, pheophorbide, camptothecin, methotrexate, azidothymidine, and the anthracyclines daunorubicin and doxorubicin, through the control of their efflux. In placenta, it limits the penetration of drugs from the maternal plasma into the fetus. May play a role in early stem cell self-renewal by blocking differentiation. In inflammatory macrophages, exports itaconate from the cytosol to the extracellular compartment and limits the activation of TFEB-dependent lysosome biogenesis involved in antibacterial innate immune response. The polypeptide is Broad substrate specificity ATP-binding cassette transporter ABCG2 (ABCG2) (Homo sapiens (Human)).